Here is a 91-residue protein sequence, read N- to C-terminus: Small ribosomal subunit protein bS20 (91 aa).

This sequence belongs to the bacterial ribosomal protein bS20 family.

In terms of biological role, binds directly to 16S ribosomal RNA. The polypeptide is Small ribosomal subunit protein bS20 (Mycoplasma mobile (strain ATCC 43663 / 163K / NCTC 11711) (Mesomycoplasma mobile)).